The chain runs to 499 residues: Calcium/calmodulin-dependent protein kinase type II subunit delta (499 aa).

An N-acetylalanine modification is found at Ala-2. The Protein kinase domain occupies 14–272 (YQLFEELGKG…ASEALKHPWI (259 aa)). Residues 20–28 (LGKGAFSVV) and Lys-43 each bind ATP. Catalysis depends on Asp-136, which acts as the Proton acceptor. The segment at 283–292 (HRQETVDCLK) is autoinhibitory domain. Thr-287 is modified (phosphothreonine; by autocatalysis). The interval 291-301 (LKKFNARRKLK) is calmodulin-binding. A phosphothreonine; by autocatalysis mark is found at Thr-306 and Thr-307. Phosphoserine is present on Ser-315. Lys-318 carries the post-translational modification N6-acetyllysine. Phosphoserine occurs at positions 319 and 330. Thr-331 bears the Phosphothreonine mark. The residue at position 333 (Ser-333) is a Phosphoserine. Phosphothreonine is present on residues Thr-336 and Thr-337. Residues Ser-404, Ser-490, and Ser-494 each carry the phosphoserine modification.

Belongs to the protein kinase superfamily. CAMK Ser/Thr protein kinase family. CaMK subfamily. As to quaternary structure, CAMK2 is composed of 4 different chains: alpha (CAMK2A), beta (CAMK2B), gamma (CAMK2G), and delta (CAMK2D). The different isoforms assemble into homo- or heteromultimeric holoenzymes composed of 12 subunits with two hexameric rings stacked one on top of the other. Interacts with RRAD CACNB2. Autophosphorylation of Thr-287 following activation by Ca(2+)/calmodulin. Phosphorylation of Thr-287 locks the kinase into an activated state.

It is found in the cell membrane. The protein resides in the sarcolemma. Its subcellular location is the sarcoplasmic reticulum membrane. The enzyme catalyses L-seryl-[protein] + ATP = O-phospho-L-seryl-[protein] + ADP + H(+). The catalysed reaction is L-threonyl-[protein] + ATP = O-phospho-L-threonyl-[protein] + ADP + H(+). Its activity is regulated as follows. Activated by Ca(2+)/calmodulin. Binding of calmodulin results in conformational change that relieves intrasteric autoinhibition and allows autophosphorylation of Thr-287 which turns the kinase in a constitutively active form and confers to the kinase a Ca(2+)-independent activity. In terms of biological role, calcium/calmodulin-dependent protein kinase involved in the regulation of Ca(2+) homeostatis and excitation-contraction coupling (ECC) in heart by targeting ion channels, transporters and accessory proteins involved in Ca(2+) influx into the myocyte, Ca(2+) release from the sarcoplasmic reticulum (SR), SR Ca(2+) uptake and Na(+) and K(+) channel transport. Targets also transcription factors and signaling molecules to regulate heart function. In its activated form, is involved in the pathogenesis of dilated cardiomyopathy and heart failure. Contributes to cardiac decompensation and heart failure by regulating SR Ca(2+) release via direct phosphorylation of RYR2 Ca(2+) channel on 'Ser-2808'. In the nucleus, phosphorylates the MEF2 repressor HDAC4, promoting its nuclear export and binding to 14-3-3 protein, and expression of MEF2 and genes involved in the hypertrophic program. Is essential for left ventricular remodeling responses to myocardial infarction. In pathological myocardial remodeling acts downstream of the beta adrenergic receptor signaling cascade to regulate key proteins involved in ECC. Regulates Ca(2+) influx to myocytes by binding and phosphorylating the L-type Ca(2+) channel subunit beta-2 CACNB2. In addition to Ca(2+) channels, can target and regulate the cardiac sarcolemmal Na(+) channel Nav1.5/SCN5A and the K+ channel Kv4.3/KCND3, which contribute to arrhythmogenesis in heart failure. Phosphorylates phospholamban (PLN/PLB), an endogenous inhibitor of SERCA2A/ATP2A2, contributing to the enhancement of SR Ca(2+) uptake that may be important in frequency-dependent acceleration of relaxation (FDAR) and maintenance of contractile function during acidosis. May participate in the modulation of skeletal muscle function in response to exercise, by regulating SR Ca(2+) transport through phosphorylation of PLN/PLB and triadin, a ryanodine receptor-coupling factor. In response to interferon-gamma (IFN-gamma) stimulation, catalyzes phosphorylation of STAT1, stimulating the JAK-STAT signaling pathway. In Sus scrofa (Pig), this protein is Calcium/calmodulin-dependent protein kinase type II subunit delta (CAMK2D).